A 277-amino-acid chain; its full sequence is 3-methyl-2-oxobutanoate hydroxymethyltransferase (277 aa).

Mg(2+) contacts are provided by aspartate 43 and aspartate 82. 3-methyl-2-oxobutanoate contacts are provided by residues 43 to 44, aspartate 82, and lysine 112; that span reads DS. Residue glutamate 114 coordinates Mg(2+). The active-site Proton acceptor is glutamate 181.

Belongs to the PanB family. As to quaternary structure, homodecamer; pentamer of dimers. Mg(2+) is required as a cofactor.

The protein localises to the cytoplasm. It catalyses the reaction 3-methyl-2-oxobutanoate + (6R)-5,10-methylene-5,6,7,8-tetrahydrofolate + H2O = 2-dehydropantoate + (6S)-5,6,7,8-tetrahydrofolate. Its pathway is cofactor biosynthesis; (R)-pantothenate biosynthesis; (R)-pantoate from 3-methyl-2-oxobutanoate: step 1/2. In terms of biological role, catalyzes the reversible reaction in which hydroxymethyl group from 5,10-methylenetetrahydrofolate is transferred onto alpha-ketoisovalerate to form ketopantoate. The chain is 3-methyl-2-oxobutanoate hydroxymethyltransferase from Bacillus licheniformis (strain ATCC 14580 / DSM 13 / JCM 2505 / CCUG 7422 / NBRC 12200 / NCIMB 9375 / NCTC 10341 / NRRL NRS-1264 / Gibson 46).